The chain runs to 155 residues: Protein SREK1IP1 (155 aa).

A CCHC-type zinc finger spans residues 13–30 (AGCKKCGYPGHLTFECRN). The disordered stretch occupies residues 43 to 155 (DVSSTSTEDS…SSSSQSSSSD (113 aa)). Residues 58-74 (EVARAPADKKNVTDTGK) show a composition bias toward basic and acidic residues. Residues 75–93 (KKLKRKKEKKLKKHRKRLH) show a composition bias toward basic residues. The segment covering 94–103 (SSSESDDNSK) has biased composition (basic and acidic residues). Positions 104–137 (AKKRKSQKKEKRVKHKAKKGKQHKKDKRKEKRER) are enriched in basic residues. Over residues 140–155 (SSSSSSSSSSQSSSSD) the composition is skewed to low complexity.

Functionally, possible splicing regulator involved in the control of cellular survival. The polypeptide is Protein SREK1IP1 (srek1ip1) (Xenopus tropicalis (Western clawed frog)).